Reading from the N-terminus, the 159-residue chain is Late embryogenesis abundant protein 50 (159 aa).

SMP domains follow at residues 30–87 and 96–151; these read TTLT…RNQK and NLGD…YKLN.

The protein belongs to the LEA type SMP family.

It is found in the cytoplasm. It localises to the nucleus. LEA proteins are late embryonic proteins abundant in higher plant seed embryos. The function of those proteins is not known. The sequence is that of Late embryogenesis abundant protein 50 from Arabidopsis thaliana (Mouse-ear cress).